The primary structure comprises 218 residues: Vacuolar protein-sorting-associated protein 37 homolog 2 (218 aa).

Positions 1-51 are disordered; that stretch reads MFNFWGSKEQQQGQSRPSPEASATPWYSPSLVTSPSSSRPQTSGQIPSHVS. Residues 8-17 are compositionally biased toward polar residues; sequence KEQQQGQSRP. Residues 28-40 show a composition bias toward low complexity; it reads SPSLVTSPSSSRP. The VPS37 C-terminal domain maps to 137-218; it reads QEKLNELENQ…HLAAKTSSIG (82 aa).

Belongs to the VPS37 family. In terms of assembly, component of the endosomal sorting required for transport complex I (ESCRT-I), composed of ELC, VPS28 and VPS37. Interacts with ELC.

It is found in the endosome. In terms of biological role, component of the ESCRT-I complex (endosomal sorting complex required for transport I), a regulator of vesicular trafficking process. Required for the sorting of endocytic ubiquitinated cargos into multivesicular bodies (MVBs). This is Vacuolar protein-sorting-associated protein 37 homolog 2 (VPS37-2) from Arabidopsis thaliana (Mouse-ear cress).